The chain runs to 369 residues: Methionine import ATP-binding protein MetN 1 (369 aa).

Residues 1–26 (MTTMTVPPSLLPLEPFPTAPDTRAST) form a disordered region. Residues 29–265 (IRLHGLGKRY…PRHAVTRSLL (237 aa)) enclose the ABC transporter domain. ATP is bound at residue 62 to 69 (GRSGAGKS).

This sequence belongs to the ABC transporter superfamily. Methionine importer (TC 3.A.1.24) family. In terms of assembly, the complex is composed of two ATP-binding proteins (MetN), two transmembrane proteins (MetI) and a solute-binding protein (MetQ).

The protein localises to the cell inner membrane. The catalysed reaction is L-methionine(out) + ATP + H2O = L-methionine(in) + ADP + phosphate + H(+). It catalyses the reaction D-methionine(out) + ATP + H2O = D-methionine(in) + ADP + phosphate + H(+). In terms of biological role, part of the ABC transporter complex MetNIQ involved in methionine import. Responsible for energy coupling to the transport system. The protein is Methionine import ATP-binding protein MetN 1 of Pseudomonas aeruginosa (strain UCBPP-PA14).